Consider the following 62-residue polypeptide: UPF0434 protein Arad_4458 (62 aa).

This sequence belongs to the UPF0434 family.

The chain is UPF0434 protein Arad_4458 from Rhizobium rhizogenes (strain K84 / ATCC BAA-868) (Agrobacterium radiobacter).